The chain runs to 236 residues: Small ribosomal subunit protein uS2c (236 aa).

Belongs to the universal ribosomal protein uS2 family.

It is found in the plastid. The protein localises to the chloroplast. The sequence is that of Small ribosomal subunit protein uS2c (rps2) from Oryza nivara (Indian wild rice).